Reading from the N-terminus, the 228-residue chain is MVENIALLPEFAAQYPFLWGSFLFLSGLAFGSFFNVVIHRLPLMMEQAEGINLCFPASFCPQCREPIAWRDNIPLLGFLFLKGRSRCCGQPISPRYPLMELATGALFVLAGYLMAPGVPLLGGLILLSLLLILAAIDAQTQLLPDGLTLPLMWAGLLFNLSATYVPLAEAVVGAMAGYLSLWSVYWVFRLLSGKEALGYGDFKLLAALGAWLGWQALPQTLLLASPAA.

6 helical membrane-spanning segments follow: residues 18–38 (LWGS…NVVI), 95–115 (RYPL…YLMA), 116–136 (PGVP…LAAI), 147–167 (LTLP…YVPL), 168–188 (AEAV…YWVF), and 204–224 (LLAA…LLLA).

It belongs to the peptidase A24 family.

It localises to the cell inner membrane. It carries out the reaction Typically cleaves a -Gly-|-Phe- bond to release an N-terminal, basic peptide of 5-8 residues from type IV prepilin, and then N-methylates the new N-terminal amino group, the methyl donor being S-adenosyl-L-methionine.. Functionally, plays an essential role in type IV pili and type II pseudopili formation by proteolytically removing the leader sequence from substrate proteins and subsequently monomethylating the alpha-amino group of the newly exposed N-terminal phenylalanine. The polypeptide is Prepilin leader peptidase/N-methyltransferase (pulO) (Klebsiella pneumoniae).